Here is a 148-residue protein sequence, read N- to C-terminus: Ribonuclease H (148 aa).

The 141-residue stretch at 1–141 (MKTVEIYTDG…ADELANLGVK (141 aa)) folds into the RNase H type-1 domain. Positions 9, 47, 69, and 133 each coordinate Mg(2+).

The protein belongs to the RNase H family. In terms of assembly, monomer. It depends on Mg(2+) as a cofactor.

The protein localises to the cytoplasm. The enzyme catalyses Endonucleolytic cleavage to 5'-phosphomonoester.. In terms of biological role, endonuclease that specifically degrades the RNA of RNA-DNA hybrids. This is Ribonuclease H from Hahella chejuensis (strain KCTC 2396).